A 487-amino-acid chain; its full sequence is 1-hydroxycarotenoid 3,4-desaturase (487 aa).

FAD contacts are provided by residues glycine 12, glutamate 31, lysine 39, 55-56, valine 247, asparagine 275, leucine 431, glycine 461, and 468-469; these read SL and GI.

It belongs to the carotenoid/retinoid oxidoreductase family. In terms of assembly, monomer.

The catalysed reaction is rhodopin + A = (3E)-3,4-didehydrorhodopin + AH2. The enzyme catalyses 1'-hydroxy-gamma-carotene + A = 1'-hydroxytorulene + AH2. It carries out the reaction 1-hydroxy-all-trans-1,2-dihydro-neurosporene + A = demethylspheroidene + AH2. It catalyses the reaction 1,1'-dihydroxy-1,1',2,2'-tetrahydroneurosporene + A = 1'-hydroxy-demethylspheroidene + AH2. The catalysed reaction is 1,1'-dihydroxy-1,1',2,2'-tetrahydrolycopene + A = 1,1'-dihydroxy-3,4-didehydro-1,2-dihydrolycopene + AH2. It participates in carotenoid biosynthesis. Catalyzes the introduction of a C-3,4 double bond into 1'-hydroxy-gamma-carotene and rhodopin (1-hydroxylycopene) to yield 1'-hydroxytorulene and (3E)-3,4-didehydrorhodopin, respectively. Can also use 1-hydroxy-all-trans-1,2-dihydro-neurosporene, 1,1'-dihydroxy-1,1',2,2'-tetrahydroneurosporene and 1,1'-dihydroxy-1,1',2,2'-tetrahydrolycopene. Probably involved in the synthesis of myxol, a gamma-carotene derivative. May use FAD as a proton acceptor. In Nonlabens dokdonensis (strain DSM 17205 / KCTC 12402 / DSW-6) (Donghaeana dokdonensis), this protein is 1-hydroxycarotenoid 3,4-desaturase.